Consider the following 645-residue polypeptide: Cyclic nucleotide-gated channel rod photoreceptor subunit alpha (645 aa).

The Cytoplasmic segment spans residues 1-121; that stretch reads MKVGVIETHH…PAGNMYYNWL (121 aa). Residues 53–100 are disordered; sequence NNNSNKDEEKKKKKEKKSKSENKKDGERQKNKEKKEKHKNKDKKKGKE. A compositionally biased stretch (basic and acidic residues) spans 70–86; that stretch reads SKSENKKDGERQKNKEK. Basic residues predominate over residues 87–96; it reads KEKHKNKDKK. Residues 122–143 form a helical membrane-spanning segment; that stretch reads FCITMPVMYNWTMIIARACFDE. The Extracellular segment spans residues 144–153; the sequence is LQNDYLAVWF. Residues 154–174 traverse the membrane as a helical segment; that stretch reads IVDYVSDVIYIADMFVRTRTG. Over 175 to 199 the chain is Cytoplasmic; that stretch reads YLEQGLLVKEEQKLKEKYKSSLQFK. The helical transmembrane segment at 200–218 threads the bilayer; sequence LDFLSIIPTDLLYFKLGLN. The Extracellular portion of the chain corresponds to 219–223; it reads YPELR. The helical transmembrane segment at 224 to 242 threads the bilayer; that stretch reads INRLLRVARMFEFFQRTET. Residues 243–249 lie on the Cytoplasmic side of the membrane; it reads RTNYPNI. The helical transmembrane segment at 250–273 threads the bilayer; that stretch reads FRISNLVMYIVIIIHWNACVYYSI. At 274 to 296 the chain is on the extracellular side; sequence SKAIGFGADTWVYPNTSHPEFAR. Transmembrane regions (helical) follow at residues 297–331 and 332–356; these read LTRK…FFVV and VDFL…SNMN. Residues 357 to 645 are Cytoplasmic-facing; it reads AARAEFQAKI…TDKPGVTKTE (289 aa). 3',5'-cyclic GMP is bound by residues 439 to 561, E498, and R513; that span reads LLVE…DGLL.

It belongs to the cyclic nucleotide-gated cation channel (TC 1.A.1.5) family.

The protein localises to the membrane. Functionally, visual signal transduction is mediated by a G-protein coupled cascade using cGMP as second messenger. This protein can be activated by cGMP which leads to an opening of the cation channel and thereby causing a depolarization of rod photoreceptors. This chain is Cyclic nucleotide-gated channel rod photoreceptor subunit alpha, found in Gallus gallus (Chicken).